The sequence spans 296 residues: Solute carrier protein FPSE_08119 (296 aa).

Helical transmembrane passes span 12 to 32, 122 to 142, and 219 to 239; these read GLAA…GMVA, AGVG…VILI, and AVAA…FDFV. Solcar repeat units lie at residues 16–102, 114–205, and 213–296; these read LQTA…FEKE, LSFG…AKNQ, and SPPV…GPHS.

The protein belongs to the mitochondrial carrier (TC 2.A.29) family.

Its subcellular location is the mitochondrion inner membrane. In terms of biological role, solute carrier protein; part of the Fusarium detoxification of benzoxazolinone cluster involved in the degradation of benzoxazolinones produced by the host plant. Maize, wheat, and rye produce the 2 benzoxazinone phytoanticipins 2,4-dihy-droxy-7-methoxy-1,4-benzoxazin-3-one (DIMBOA) and 2,4-dihydroxy-1,4-benzoxazin-3-one (DIBOA) that, due to their inherent instability once released, spontaneously degrade to the more stable corresponding benzoxazolinones, 6-methoxy-2-benzoxazolinone (MBOA) and 2-benzoxazolinone (BOA), respectively. This is Solute carrier protein FPSE_08119 from Fusarium pseudograminearum (strain CS3096) (Wheat and barley crown-rot fungus).